We begin with the raw amino-acid sequence, 54 residues long: Lectin alpha chain (54 aa).

The protein belongs to the leguminous lectin family. As to quaternary structure, tetramer of two alpha and two beta chains.

In Lathyrus odoratus (Sweet pea), this protein is Lectin alpha chain.